The following is a 396-amino-acid chain: Beta-peptidyl aminopeptidase BapA (396 aa).

The N-terminal stretch at 1-21 (MHYLKFPAIIAGMLLAGAASA) is a signal peptide. Residue S271 is the Nucleophile of the active site. Residues S309 and D311 each act as proton donor/acceptor in the active site.

This sequence belongs to the peptidase S58 family. As to quaternary structure, heterooctamer of 4 heterodimers ((alpha:beta)4); each heterodimer is composed of an alpha subunit and a beta subunit processed from the same precursor. Autoproteolytic processing to generate the alpha and beta subunit is required for self-activation and is proposed to use a similar mechanism as substrate cleavage.

The protein resides in the periplasm. The catalysed reaction is Cleaves N-terminal beta-homoamino acids from peptides composed of 2 to 6 amino acids.. Its activity is regulated as follows. Inhibited by AEBSF (4-(2-aminoethyl)benzenesulfonyl fluoride, Pefabloc SC). In terms of biological role, beta-aminopeptidase that can cleave synthetic beta-peptides which consist of backbone-elongated beta-amino acid residues that are not processed by common proteolytic enzymes. Can cleave the beta-peptides beta-homoVal-beta-homoAla-beta-homoLeu and beta-homoAla-beta-homoLeu. Requires a beta-amino acid at the N-terminus of peptide substrates and cleaves the peptide bond between the N-terminal beta-amino acid and the amino acid at the second position of tripeptidic substrates of the general structure H-betahXaa-Ile-betahTyr-OH according to the following preferences with regard to the side chain of the N-terminal beta-amino acid: aliphatic and aromatic &gt; OH-containing &gt; hydrogen, basic and polar. beta-homoVal-beta-homoAla-beta-homoLeu and beta-homoAla-beta-homoLeu. In Sphingosinicella microcystinivorans, this protein is Beta-peptidyl aminopeptidase BapA.